The chain runs to 764 residues: G-type lectin S-receptor-like serine/threonine-protein kinase SD3-1 (764 aa).

Residues 1–24 (MKMLRALLLCLSLVFFLAFQIVVS) form the signal peptide. Bulb-type lectin domains follow at residues 25–151 (EIQL…QSFG) and 154–279 (TDTL…WKPV). The Extracellular segment spans residues 25–442 (EIQLGSKLVV…TKSHSICIPC (418 aa)). N-linked (GlcNAc...) asparagine glycosylation is found at Asn92, Asn198, and Asn248. Residues 283 to 320 (VENQCRVFATCGSQVCSFNSSGYTECNCPFNAFVSVSD) enclose the EGF-like; atypical domain. 5 disulfides stabilise this stretch: Cys287-Cys298, Cys293-Cys308, Cys332-Cys413, Cys365-Cys388, and Cys369-Cys375. Residues Asn301 and Asn353 are each glycosylated (N-linked (GlcNAc...) asparagine). An Apple domain is found at 332–413 (CKSGFNMVKF…LSSISYVKTC (82 aa)). Asn423 is a glycosylation site (N-linked (GlcNAc...) asparagine). Residues 443–463 (LVGATSTTLVLFLGFQLGIVV) traverse the membrane as a helical segment. At 464–764 (YIYRRKKKLA…SESSQSLYEP (301 aa)) the chain is on the cytoplasmic side. The 299-residue stretch at 466–764 (YRRKKKLAKK…SESSQSLYEP (299 aa)) folds into the Protein kinase domain. Residues 508 to 516 (IGPQIFKGV) and Lys526 each bind ATP. The segment at 586 to 603 (LRSKKLTWRIRTDTCLSV) is caM-binding. The disordered stretch occupies residues 738–764 (DPPPPPFACARSSPTNSSESSQSLYEP). Residues 749–764 (SSPTNSSESSQSLYEP) are compositionally biased toward low complexity.

It is found in the cell membrane. It carries out the reaction L-seryl-[protein] + ATP = O-phospho-L-seryl-[protein] + ADP + H(+). The enzyme catalyses L-threonyl-[protein] + ATP = O-phospho-L-threonyl-[protein] + ADP + H(+). The polypeptide is G-type lectin S-receptor-like serine/threonine-protein kinase SD3-1 (SD31) (Arabidopsis thaliana (Mouse-ear cress)).